The sequence spans 477 residues: Proton extrusion protein PxcA (477 aa).

The next 3 helical transmembrane spans lie at 239 to 259 (FILL…ITFV), 354 to 374 (GIKN…IIST), and 437 to 457 (FNFL…KYWI).

It belongs to the CemA family.

The protein localises to the cell inner membrane. Required for H(+) efflux immediately after light irradiation to form a rapid H(+) concentration gradient across the thylakoid membranes. Together with PxcL, contributes to transient H(+) uptake following dark to light transition. This chain is Proton extrusion protein PxcA, found in Trichodesmium erythraeum (strain IMS101).